Reading from the N-terminus, the 465-residue chain is SHC-transforming protein 1 (465 aa).

Residues 44–227 (MGPGVPYLVR…AGFDGSAWDE (184 aa)) enclose the PID domain. A CH1 region spans residues 228-369 (EEEELPDHAY…SMEDQLKREP (142 aa)). Residues 281–315 (VSGAEQDSRKMQPTLQGRERFPVPCSRPPNRPDLF) form a disordered region. An SH2 domain is found at 370–461 (WYQGKMSRKE…GSELCLQQPV (92 aa)).

Interacts with grb2. In terms of tissue distribution, highly expressed in oocytes and embryo. Also expressed in liver. Detected in ovary, testis and heart and to a lesser extent in liver (at protein level).

The protein resides in the cytoplasm. Implicated in ras-dependent oocyte maturation induced by insulin/IGF1. This Xenopus laevis (African clawed frog) protein is SHC-transforming protein 1 (shc1).